Consider the following 497-residue polypeptide: Arabinose import ATP-binding protein AraG (497 aa).

2 ABC transporter domains span residues 6-242 and 250-497; these read LRFD…MVGR and FRPR…ALPA. ATP is bound at residue 38–45; sequence GENGAGKS.

It belongs to the ABC transporter superfamily. Arabinose importer (TC 3.A.1.2.2) family. In terms of assembly, the complex is composed of two ATP-binding proteins (AraG), two transmembrane proteins (AraH) and a solute-binding protein (AraF).

It localises to the cell inner membrane. It catalyses the reaction L-arabinose(out) + ATP + H2O = L-arabinose(in) + ADP + phosphate + H(+). In terms of biological role, part of the ABC transporter complex AraFGH involved in arabinose import. Responsible for energy coupling to the transport system. This chain is Arabinose import ATP-binding protein AraG, found in Chromohalobacter salexigens (strain ATCC BAA-138 / DSM 3043 / CIP 106854 / NCIMB 13768 / 1H11).